Here is a 380-residue protein sequence, read N- to C-terminus: Epoxyqueuosine reductase (380 aa).

The active-site Proton donor is the D134. A 4Fe-4S ferredoxin-type 1 domain is found at 179 to 208; the sequence is PPDQPIEDQCGSCTKCIDICPTGALIQGGQ. Residues C188, C191, C194, C198, C214, C240, C243, and C247 each coordinate [4Fe-4S] cluster. The 4Fe-4S ferredoxin-type 2 domain maps to 226–258; it reads PEEYRDKIGNRIYGCDTCQTVCPKNKGMDFHNH.

It belongs to the QueG family. Monomer. Requires cob(II)alamin as cofactor. [4Fe-4S] cluster is required as a cofactor.

The protein localises to the cytoplasm. The enzyme catalyses epoxyqueuosine(34) in tRNA + AH2 = queuosine(34) in tRNA + A + H2O. It functions in the pathway tRNA modification; tRNA-queuosine biosynthesis. Its function is as follows. Catalyzes the conversion of epoxyqueuosine (oQ) to queuosine (Q), which is a hypermodified base found in the wobble positions of tRNA(Asp), tRNA(Asn), tRNA(His) and tRNA(Tyr). In Bacillus anthracis, this protein is Epoxyqueuosine reductase.